Here is a 99-residue protein sequence, read N- to C-terminus: Aspartyl/glutamyl-tRNA(Asn/Gln) amidotransferase subunit C (99 aa).

Belongs to the GatC family. Heterotrimer of A, B and C subunits.

It catalyses the reaction L-glutamyl-tRNA(Gln) + L-glutamine + ATP + H2O = L-glutaminyl-tRNA(Gln) + L-glutamate + ADP + phosphate + H(+). The catalysed reaction is L-aspartyl-tRNA(Asn) + L-glutamine + ATP + H2O = L-asparaginyl-tRNA(Asn) + L-glutamate + ADP + phosphate + 2 H(+). Allows the formation of correctly charged Asn-tRNA(Asn) or Gln-tRNA(Gln) through the transamidation of misacylated Asp-tRNA(Asn) or Glu-tRNA(Gln) in organisms which lack either or both of asparaginyl-tRNA or glutaminyl-tRNA synthetases. The reaction takes place in the presence of glutamine and ATP through an activated phospho-Asp-tRNA(Asn) or phospho-Glu-tRNA(Gln). The sequence is that of Aspartyl/glutamyl-tRNA(Asn/Gln) amidotransferase subunit C from Cupriavidus necator (strain ATCC 17699 / DSM 428 / KCTC 22496 / NCIMB 10442 / H16 / Stanier 337) (Ralstonia eutropha).